We begin with the raw amino-acid sequence, 210 residues long: Fibrillarin-like rRNA/tRNA 2'-O-methyltransferase (210 aa).

S-adenosyl-L-methionine-binding positions include 72–73 (TT), 88–89 (EF), 113–114 (DA), and 134–137 (DVAT).

It belongs to the methyltransferase superfamily. Fibrillarin family. In terms of assembly, interacts with nop5. Component of box C/D small ribonucleoprotein (sRNP) particles that contain rpl7ae, FlpA and nop5, plus a guide RNA.

Functionally, involved in pre-rRNA and tRNA processing. Utilizes the methyl donor S-adenosyl-L-methionine to catalyze the site-specific 2'-hydroxyl methylation of ribose moieties in rRNA and tRNA. Site specificity is provided by a guide RNA that base pairs with the substrate. Methylation occurs at a characteristic distance from the sequence involved in base pairing with the guide RNA. This Halobacterium salinarum (strain ATCC 29341 / DSM 671 / R1) protein is Fibrillarin-like rRNA/tRNA 2'-O-methyltransferase.